The following is a 278-amino-acid chain: MNLSDVPLRPGSAELLPVRGVRALQAFDNRDWVAVEVPVALEFNGIAHAVMLATPTDLADFALGFALSEGILLGRNELYGVEEAYAPEGITLKLDVASAAFARLKARRRSMAGRTGCGLCGTESLAHVTRALPPLPEGPALSTRAVARGMRELASMQVLQKVTGAVHAAAWCSAEGEALLVREDVGRHNALDKLVGALARSSVPASTGFIAVTSRASFEMVQKTVAARVPLLAAVSASTSLATAIAEDAGLTLAGFVRGDDLVIYTHPWRLNGLPANA.

C117 (cysteine persulfide intermediate) is an active-site residue.

The protein belongs to the FdhD family.

Its subcellular location is the cytoplasm. Required for formate dehydrogenase (FDH) activity. Acts as a sulfur carrier protein that transfers sulfur from IscS to the molybdenum cofactor prior to its insertion into FDH. The polypeptide is Sulfur carrier protein FdhD (Variovorax paradoxus (strain S110)).